Here is a 1004-residue protein sequence, read N- to C-terminus: Sal-like protein 2 (1004 aa).

Disordered regions lie at residues Met-1–Pro-33, Ala-51–Ser-122, Gly-137–Leu-177, Pro-220–Lys-270, and Pro-285–Gly-307. The segment at Gln-34–Cys-56 adopts a C2H2-type 1; atypical zinc-finger fold. A compositionally biased stretch (low complexity) spans Asn-71–Pro-81. The span at Pro-83–Asn-98 shows a compositional bias: basic and acidic residues. Over residues Pro-99 to Pro-110 the composition is skewed to low complexity. Residues Pro-151 to Gly-171 show a composition bias toward pro residues. At Ser-243 the chain carries Phosphoserine. 5 C2H2-type zinc fingers span residues His-372–His-394, Tyr-400–His-422, Asn-629–His-651, Phe-657–His-679, and Asn-689–His-711. The segment at Leu-712–Cys-910 is disordered. The segment covering Gln-731–Gly-742 has biased composition (polar residues). The span at Pro-756–Ser-779 shows a compositional bias: acidic residues. Ser-794, Ser-799, and Ser-803 each carry phosphoserine. The segment covering Glu-800–Val-809 has biased composition (acidic residues). The span at Ala-810 to Val-819 shows a compositional bias: low complexity. Positions Lys-820–Pro-829 are enriched in basic and acidic residues. Pro residues predominate over residues Thr-832–Asp-841. The segment covering Ala-896–Cys-910 has biased composition (basic and acidic residues). A Glycyl lysine isopeptide (Lys-Gly) (interchain with G-Cter in ubiquitin) cross-link involves residue Lys-908. 2 C2H2-type zinc fingers span residues Lys-908–His-930 and Phe-937–His-961.

Belongs to the sal C2H2-type zinc-finger protein family. In terms of tissue distribution, expressed throughout embryonic development. In adult predominantly in brain.

The protein resides in the nucleus. Its function is as follows. Probable transcription factor that plays a role in eye development before, during, and after optic fissure closure. This chain is Sal-like protein 2 (Sall2), found in Mus musculus (Mouse).